The sequence spans 98 residues: uncharacterized protein (98 aa).

The N-terminal stretch at 1–19 (MTERRRALSLAAVVDSINL) is a signal peptide. Positions 40–98 (PPGGSFSGIKRESRRKRPSRNEIYGGGVLEQEVRMRRWSKTASPPVSLHHRPLGPARKP) are disordered. Over residues 87-98 (LHHRPLGPARKP) the composition is skewed to basic residues.

This is an uncharacterized protein from Homo sapiens (Human).